The primary structure comprises 280 residues: 1-cyclohexenylcarbonyl-CoA reductase (280 aa).

Residues 22–25, 71–72, and Asn98 contribute to the NADP(+) site; these read SRGI and DV. Catalysis depends on proton acceptor residues Tyr158 and Lys165. NADP(+) is bound by residues Lys165 and 194-196; that span reads IDS.

Belongs to the short-chain dehydrogenases/reductases (SDR) family. In terms of assembly, homodimer.

The enzyme catalyses (4R,5R)-4,5-dihydroxycyclohex-2-ene-1-carbonyl-CoA + NADP(+) = (3R,4R)-3,4-dihydroxycyclohexa-1,5-diene-1-carbonyl-CoA + NADPH + H(+). It carries out the reaction (3S)-3-hydroxycyclohexane-1-carbonyl-CoA + NADP(+) = (5S)-5-hydroxycyclohex-1-ene-1-carbonyl-CoA + NADPH + H(+). It catalyses the reaction cyclohexane-1-carbonyl-CoA + NADP(+) = cyclohex-1-ene-1-carbonyl-CoA + NADPH + H(+). The protein operates within antibiotic biosynthesis. Inhibited by the thiol inhibitors p-chloromercuribenzoate, N-ethylmaleimide and iodoacetamide. Also inhibited by various divalent cations. In terms of biological role, involved in the biosynthesis of the antifungal antibiotic ansatrienin A (mycotrienin I). Catalyzes three of the reductive steps involved in the formation of the cyclohexanecarboxylic acid (CHC) moiety of ansatrienin from shikimic acid. Can use 3,4-dihydroxycyclohexa-1,5-diene-1-carbonyl-CoA, 5-hydroxycyclohex-1-ene-1-carbonyl-CoA and cyclohex-1-ene-1-carbonyl-CoA as substrates. This Streptomyces collinus protein is 1-cyclohexenylcarbonyl-CoA reductase.